The primary structure comprises 524 residues: Sexual development regulator velC (524 aa).

Disordered regions lie at residues 114-195, 322-349, 380-413, and 503-524; these read NRVL…PVHS, PGSG…MSSY, VDEE…HRFR, and GMGK…ARVE. Composition is skewed to polar residues over residues 131-153 and 178-195; these read TTGS…ENAG and LDSQ…PVHS. The Velvet domain occupies 248-500; the sequence is SSSSRYRLFI…ELGFVELKTR (253 aa). Residues 393–402 show a composition bias toward polar residues; sequence PSSTDDSTYD.

Belongs to the velvet family. VelC subfamily. As to quaternary structure, interacts with vosA.

It localises to the nucleus. Functionally, velvet-domain-containing protein that acts as a positive regulator of sexual development. Positively regulates the production of the sexual fruiting bodies called cleistothecia. The polypeptide is Sexual development regulator velC (Emericella nidulans (strain FGSC A4 / ATCC 38163 / CBS 112.46 / NRRL 194 / M139) (Aspergillus nidulans)).